The chain runs to 561 residues: Endoplasmic reticulum oxidoreductin-1 (561 aa).

The signal sequence occupies residues 1-18 (MVKVLQLCFLSAISLVQA). Residues N20 and N39 are each glycosylated (N-linked (GlcNAc...) asparagine). 5 cysteine pairs are disulfide-bonded: C95–C349, C105–C110, C145–C166, C152–C295, and C352–C355. N-linked (GlcNAc...) asparagine glycosylation is present at N135. FAD is bound by residues R187, T189, W200, S228, H231, and R260. N342 is a glycosylation site (N-linked (GlcNAc...) asparagine). The Nucleophile role is filled by C352. The active site involves C355. N452 carries an N-linked (GlcNAc...) asparagine glycan.

This sequence belongs to the EROs family. In terms of assembly, may function both as a monomer and a homodimer. It depends on FAD as a cofactor.

The protein localises to the endoplasmic reticulum membrane. Essential oxidoreductase that oxidizes proteins in the endoplasmic reticulum to produce disulfide bonds. Acts by oxidizing directly PDI1 isomerase through a direct disulfide exchange. Does not act as a direct oxidant of folding substrate, but relies on PDI1 to transfer oxidizing equivalent. Does not oxidize all pdi related proteins, suggesting that it can discriminate between PDI1 and related proteins. Its reoxidation probably involves electron transfer to molecular oxygen via FAD. Acts independently of glutathione. May be responsible for a significant proportion of reactive oxygen species (ROS) in the cell, thereby being a source of oxidative stress. The chain is Endoplasmic reticulum oxidoreductin-1 (ERO1) from Kluyveromyces lactis (strain ATCC 8585 / CBS 2359 / DSM 70799 / NBRC 1267 / NRRL Y-1140 / WM37) (Yeast).